The sequence spans 186 residues: Ribosome-recycling factor (186 aa).

The protein belongs to the RRF family.

It is found in the cytoplasm. Functionally, responsible for the release of ribosomes from messenger RNA at the termination of protein biosynthesis. May increase the efficiency of translation by recycling ribosomes from one round of translation to another. The polypeptide is Ribosome-recycling factor (Chlorobaculum tepidum (strain ATCC 49652 / DSM 12025 / NBRC 103806 / TLS) (Chlorobium tepidum)).